The chain runs to 71 residues: Small ribosomal subunit protein bS21 (71 aa).

This sequence belongs to the bacterial ribosomal protein bS21 family.

This is Small ribosomal subunit protein bS21 from Buchnera aphidicola subsp. Schizaphis graminum (strain Sg).